A 222-amino-acid polypeptide reads, in one-letter code: Nucleoside triphosphate pyrophosphatase (222 aa).

The active-site Proton acceptor is the aspartate 82.

Belongs to the Maf family. A divalent metal cation is required as a cofactor.

The protein resides in the cytoplasm. It catalyses the reaction a ribonucleoside 5'-triphosphate + H2O = a ribonucleoside 5'-phosphate + diphosphate + H(+). The enzyme catalyses a 2'-deoxyribonucleoside 5'-triphosphate + H2O = a 2'-deoxyribonucleoside 5'-phosphate + diphosphate + H(+). Nucleoside triphosphate pyrophosphatase. May have a dual role in cell division arrest and in preventing the incorporation of modified nucleotides into cellular nucleic acids. The polypeptide is Nucleoside triphosphate pyrophosphatase (Mycobacterium tuberculosis (strain ATCC 25177 / H37Ra)).